The following is a 169-amino-acid chain: MGLKYFSHLPEELRQKIVHDHLQQERKKEFLEKAIEDSCRRHVSLLKSDPSPSELYALSKFLDSLADYVGKQFNTRCLIKWKKDVPANIKFEVMEEQHLRLYGFVDMDDLLCREVLPPEEDDDITYEDGMIVNCSELDKLFEALGIKVVYITVSKNCICTPLNKDIVIS.

Positions 9–22 (LPEELRQKIVHDHL) are binding to host SKP1 protein. The LXCXE motif, interaction with host RBR signature appears at 110–114 (LLCRE).

The protein belongs to the nanovirus Clink protein family. In terms of assembly, interacts with host SKP1. Interacts (via LXCXE domain) with host retinoblastoma-related protein 1 (RBR1). Interacts (via LXCXE domain) with retinoblastoma-related proteins (RBR).

Its function is as follows. Interacts with and disrupts the function of host retinoblastoma-related proteins RBR, which are key regulators of the cell cycle. Induces transcriptional activation of E2F-regulated S-phase and G2/M-phase-specific genes. Inactivation of the ability of RBR to arrest the cell cycle leads to the stimulation of viral DNA replication. This Cicer arietinum (Chickpea) protein is Cell cycle link protein (DNA-C).